We begin with the raw amino-acid sequence, 86 residues long: Exodeoxyribonuclease 7 small subunit (86 aa).

Residues methionine 1 to serine 26 are disordered.

Belongs to the XseB family. As to quaternary structure, heterooligomer composed of large and small subunits.

The protein localises to the cytoplasm. It catalyses the reaction Exonucleolytic cleavage in either 5'- to 3'- or 3'- to 5'-direction to yield nucleoside 5'-phosphates.. In terms of biological role, bidirectionally degrades single-stranded DNA into large acid-insoluble oligonucleotides, which are then degraded further into small acid-soluble oligonucleotides. The polypeptide is Exodeoxyribonuclease 7 small subunit (Helicobacter pylori (strain HPAG1)).